We begin with the raw amino-acid sequence, 202 residues long: tRNA (pseudouridine(54)-N(1))-methyltransferase (202 aa).

The S-adenosyl-L-methionine site is built by Leu130, Gly152, and Cys185.

Belongs to the methyltransferase superfamily. TrmY family. In terms of assembly, homodimer.

The protein localises to the cytoplasm. It carries out the reaction pseudouridine(54) in tRNA + S-adenosyl-L-methionine = N(1)-methylpseudouridine(54) in tRNA + S-adenosyl-L-homocysteine + H(+). Specifically catalyzes the N1-methylation of pseudouridine at position 54 (Psi54) in tRNAs. The polypeptide is tRNA (pseudouridine(54)-N(1))-methyltransferase (Methanococcoides burtonii (strain DSM 6242 / NBRC 107633 / OCM 468 / ACE-M)).